The chain runs to 360 residues: 3-dehydroquinate synthase (360 aa).

Residues 71 to 76, 105 to 109, 129 to 130, lysine 142, lysine 151, and 169 to 172 each bind NAD(+); these read DGEQFK, GVIGD, TT, and FLKT. Residues glutamate 184, histidine 247, and histidine 264 each contribute to the Zn(2+) site.

Belongs to the sugar phosphate cyclases superfamily. Dehydroquinate synthase family. It depends on NAD(+) as a cofactor. Co(2+) is required as a cofactor. Requires Zn(2+) as cofactor.

The protein localises to the cytoplasm. The catalysed reaction is 7-phospho-2-dehydro-3-deoxy-D-arabino-heptonate = 3-dehydroquinate + phosphate. It functions in the pathway metabolic intermediate biosynthesis; chorismate biosynthesis; chorismate from D-erythrose 4-phosphate and phosphoenolpyruvate: step 2/7. Functionally, catalyzes the conversion of 3-deoxy-D-arabino-heptulosonate 7-phosphate (DAHP) to dehydroquinate (DHQ). The sequence is that of 3-dehydroquinate synthase from Buchnera aphidicola subsp. Schizaphis graminum (strain Sg).